The following is a 972-amino-acid chain: UPF0746 protein DDB_G0280785 (972 aa).

A compositionally biased stretch (basic and acidic residues) spans 1–19; it reads MISNKRKEIENINRHHEKD. A disordered region spans residues 1-30; sequence MISNKRKEIENINRHHEKDNDDDDSDGIDN. Residues 44–78 form the SAP domain; it reads SGSTNYRELQIIAKSLGLASNGKKQLVYNRIEGYF.

This sequence belongs to the UPF0746 family.

In Dictyostelium discoideum (Social amoeba), this protein is UPF0746 protein DDB_G0280785.